We begin with the raw amino-acid sequence, 547 residues long: Glucose-6-phosphate isomerase 2 (547 aa).

Residue E351 is the Proton donor of the active site. Catalysis depends on residues H382 and K508.

Belongs to the GPI family.

The protein localises to the cytoplasm. It catalyses the reaction alpha-D-glucose 6-phosphate = beta-D-fructose 6-phosphate. The protein operates within carbohydrate biosynthesis; gluconeogenesis. Its pathway is carbohydrate degradation; glycolysis; D-glyceraldehyde 3-phosphate and glycerone phosphate from D-glucose: step 2/4. Its function is as follows. Catalyzes the reversible isomerization of glucose-6-phosphate to fructose-6-phosphate. The polypeptide is Glucose-6-phosphate isomerase 2 (Neisseria meningitidis serogroup A / serotype 4A (strain DSM 15465 / Z2491)).